The primary structure comprises 780 residues: MTKKQAIKRKVKEPEPTNEQSSASEPSDNEEDDDLLQAVKDPGEDTTDDEGIDQEYQSDSSEDLEFESDEEGNYLGRKANNEAEGDAEEDEDDDEEEDEDSDEASEDNDDAEEEKPSSSMTAAVQTKVEPIIQIIPRDPSKPEYEDSDTSDEEDIRNTVGNIPMHWYDEYKHIGYDWDAKKIVKPPKGDQIDDFLRKIEDPNFWRTVKDPQTGQEVLLTDEDIALIKRVNSGRIPNAEHDEYAPWIEWFTSEVEKMPIKNVPDHKRSFLPSVSEKKKVSRMVHALKMGWMKTTEEVEREKQKKRGPKFYMLWETDTGRESMRRIHDPVSAPKRDLPGHAESYNPPPEYLFDEKETKEWLKQKDEPHKRKLHFMPQKFKSLREVPAYSRYLRERFLRCLDLYLCPRAKRVKLNIDAEYLIPKLPSPRDLQPFPTVESLVYRGHTDLVRSVSVEPKGEYMASGSDDKTVKIWEIATGRCIRTIETNDVVRCVAWCPNAKLSIIAVATGSRLLLINPKVGDKLLIKKTDDLLAASPSLDVIDNERIKTAVQWSNAEPEEQEKGVRVVITHFKPIRQVTWHGRGDYLATVMPEGANRSALIHQLSKRRSQIPFSKSKGLIQCVLFHPVKPCFFVATQHNIRIYDLVKQELIKKLLTNSKWISGMSIHPKGDNLLVSTYDKKMLWFDLDLSTKPYQTMRLHRNAVRSVAFHLRYPLFASGSDDQAVIVSHGMVYNDLLQNPLIVPLKKLQTHEKRDEFGVLDVSWHPVQPWVFSTGADCTIRLYT.

The segment covering 1–11 has biased composition (basic residues); it reads MTKKQAIKRKV. The tract at residues 1–155 is disordered; it reads MTKKQAIKRK…DSDTSDEEDI (155 aa). The segment covering 17–26 has biased composition (polar residues); it reads TNEQSSASEP. 4 stretches are compositionally biased toward acidic residues: residues 44–53, 60–72, 83–113, and 145–154; these read EDTTDDEGID, SSED…DEEG, AEGD…DAEE, and EDSDTSDEED. WD repeat units follow at residues 441–482, 484–522, 566–608, 611–649, 652–691, 695–734, and 750–780; these read GHTD…RTIE, NDVV…KLLI, THFK…SQIP, KSKG…LIKK, TNSK…KPYQ, LHRN…DLLQ, and RDEF…RLYT.

It belongs to the WD repeat BOP1/ERB1 family.

Its subcellular location is the nucleus. The protein resides in the nucleolus. It is found in the nucleoplasm. Functionally, required for maturation of ribosomal RNAs and formation of the large ribosomal subunit. The polypeptide is Ribosome biogenesis protein BOP1 homolog (Drosophila virilis (Fruit fly)).